Reading from the N-terminus, the 500-residue chain is MPSLSSLCPDIVLIGAGIMSSTLAALLRELDPSLSMVMFETLSDCGQESSYAWNNAGTGHAGNCELNYTPQRADGSVDISKALAVNTEFDLSRQLWAHWVREGRIADPAAFVQPCPHISLVWGAENVAFLKARYEAMVAHHCFADMEYTDDPAVIAQWAPLAMAGRDTTQPVAATRIREGTDVNFGALTHALTASLKTDRSVSIHYNHRVTDLTRTEDGRWRVTATDTESGHAITVLTRFVFIGAGGNALPLLQKSGIPEATHYAGFPVSGLWLRCTDPAITRQHHAKVYGKAPVGSPPMSVPHLDTRVIDGKSCLLFGPYAGFSTKFLKSGSWTDYFRSLTPKNIIPALTAGKDNLGLLDYLVKQVIQTNEARFQALLDFYPTARPEDWSKVVAGQRVQIIRPDSGLHGKLRFGTELVKNADRSLVAVLGASPGASIAASVALQVVQGCFPERLVEGDWLPRLRQVFPAYGVDLTQDAAACATLRRDTAQVLGIASEAG.

It belongs to the MQO family. It depends on FAD as a cofactor.

It carries out the reaction (S)-malate + a quinone = a quinol + oxaloacetate. It functions in the pathway carbohydrate metabolism; tricarboxylic acid cycle; oxaloacetate from (S)-malate (quinone route): step 1/1. The chain is Probable malate:quinone oxidoreductase from Gluconobacter oxydans (strain 621H) (Gluconobacter suboxydans).